The chain runs to 441 residues: Eukaryotic translation initiation factor 3 subunit E (441 aa).

One can recognise a PCI domain in the interval 223–407 (IFFNHDNGRT…GTVIMEPTQP (185 aa)).

The protein belongs to the eIF-3 subunit E family. In terms of assembly, component of the eukaryotic translation initiation factor 3 (eIF-3) complex (Potential). Binds to the translation initiation factors TIF3F1 and TIF3H1. Associates with the CSN (COP9 signalosome) complex. Interacts directly with CSN1, CSN4, CSN6A, CSN6B, CSN7, CSN8 and TIF3C1. Binds to 40S small ribosomal subunit S9 (RPS9B and RPS9C) via its N-terminal part. Interacts with the 26S proteasome subunit RPN12a via its C-terminal part. Also binds with At1g27930 and At4g30620.

The protein resides in the cytoplasm. Its subcellular location is the nucleus. Its function is as follows. Component of the eukaryotic translation initiation factor 3 (eIF-3) complex, which is involved in protein synthesis of a specialized repertoire of mRNAs and, together with other initiation factors, stimulates binding of mRNA and methionyl-tRNAi to the 40S ribosome. The eIF-3 complex specifically targets and initiates translation of a subset of mRNAs involved in cell proliferation (Potential). Negatively regulates translation during flower development. In Arabidopsis thaliana (Mouse-ear cress), this protein is Eukaryotic translation initiation factor 3 subunit E.